Here is an 80-residue protein sequence, read N- to C-terminus: Translation initiation factor IF-1, chloroplastic (80 aa).

Residues 1–74 (MKEQKWIHEG…TRGRIIYRLR (74 aa)) enclose the S1-like domain.

This sequence belongs to the IF-1 family. In terms of assembly, component of the 30S ribosomal translation pre-initiation complex which assembles on the 30S ribosome in the order IF-2 and IF-3, IF-1 and N-formylmethionyl-tRNA(fMet); mRNA recruitment can occur at any time during PIC assembly.

It localises to the plastid. The protein resides in the chloroplast. Functionally, one of the essential components for the initiation of protein synthesis. Stabilizes the binding of IF-2 and IF-3 on the 30S subunit to which N-formylmethionyl-tRNA(fMet) subsequently binds. Helps modulate mRNA selection, yielding the 30S pre-initiation complex (PIC). Upon addition of the 50S ribosomal subunit IF-1, IF-2 and IF-3 are released leaving the mature 70S translation initiation complex. This is Translation initiation factor IF-1, chloroplastic from Illicium parviflorum (Yellow anise tree).